Reading from the N-terminus, the 318-residue chain is Transaldolase (318 aa).

The Schiff-base intermediate with substrate role is filled by Lys-132.

Belongs to the transaldolase family. Type 1 subfamily. As to quaternary structure, homodimer.

The protein resides in the cytoplasm. It catalyses the reaction D-sedoheptulose 7-phosphate + D-glyceraldehyde 3-phosphate = D-erythrose 4-phosphate + beta-D-fructose 6-phosphate. It participates in carbohydrate degradation; pentose phosphate pathway; D-glyceraldehyde 3-phosphate and beta-D-fructose 6-phosphate from D-ribose 5-phosphate and D-xylulose 5-phosphate (non-oxidative stage): step 2/3. Transaldolase is important for the balance of metabolites in the pentose-phosphate pathway. The sequence is that of Transaldolase from Shewanella baltica (strain OS195).